The following is a 1423-amino-acid chain: ABC transporter G family member 40 (1423 aa).

Positions methionine 1 to valine 19 are enriched in polar residues. The disordered stretch occupies residues methionine 1–glutamate 36. Asparagine 16 carries an N-linked (GlcNAc...) asparagine glycan. A compositionally biased stretch (basic and acidic residues) spans tryptophan 20–arginine 34. One can recognise an ABC transporter 1 domain in the interval leucine 154 to proline 427. Glycine 187 to threonine 194 contacts ATP. An N-linked (GlcNAc...) asparagine glycan is attached at asparagine 376. The ABC transmembrane type-2 1 domain occupies glutamate 505–phenylalanine 718. 6 helical membrane passes run phenylalanine 523–phenylalanine 543, alanine 562–isoleucine 582, isoleucine 611–phenylalanine 631, isoleucine 643–glycine 663, isoleucine 667–valine 687, and tryptophan 696–asparagine 716. An N-linked (GlcNAc...) asparagine glycan is attached at asparagine 729. A helical membrane pass occupies residues glycine 756–leucine 776. Residues isoleucine 825–glutamine 1077 form the ABC transporter 2 domain. Glycine 870–threonine 877 provides a ligand contact to ATP. Asparagine 895 carries an N-linked (GlcNAc...) asparagine glycan. The residue at position 962 (threonine 962) is a Phosphothreonine. One can recognise an ABC transmembrane type-2 2 domain in the interval threonine 1150–phenylalanine 1364. 6 consecutive transmembrane segments (helical) span residues phenylalanine 1174–lysine 1194, serine 1207–valine 1227, isoleucine 1257–phenylalanine 1277, phenylalanine 1284–methionine 1304, isoleucine 1314–isoleucine 1334, and valine 1341–alanine 1361. N-linked (GlcNAc...) asparagine glycosylation occurs at asparagine 1375. The helical transmembrane segment at valine 1395 to isoleucine 1415 threads the bilayer.

The protein belongs to the ABC transporter superfamily. ABCG family. PDR (TC 3.A.1.205) subfamily. As to quaternary structure, interacts with LECRK91 and LECRK92. In terms of tissue distribution, mostly observed in inflorescence meristems relative to cauline leaves and developing siliques. Ubiquitous with higher levels in leaves, stems and flowers. Also present in primary and lateral roots. In seeds, mainly expressed in the embryo and, to a lesser extent, in the endosperm.

Its subcellular location is the cell membrane. It catalyses the reaction abscisate(out) + ATP + H2O = abscisate(in) + ADP + phosphate + H(+). Its activity is regulated as follows. Inhibited by glibenclamide, verapamil and vanadate (ABC transporters inhibitors). Functionally, high affinity abscisic acid (ABA) transporter that mediates the import of ABA, with a preference for (+)-ABA, through the plasma membrane, especially in guard cells, and is involved in the intercellular and intracellular ABA signaling pathways leading, for example, to stomatal closure, thus conferring drought tolerance. Together with ABCG30, import into the embryo the ABA delivered from the endosperm via ABCG25 and ABCG31-mediated export to suppress radicle extension and subsequent embryonic growth. May be a general defense protein. Functions as a pump to exclude Pb(2+) ions and/or Pb(2+)-containing toxic compounds from the cytoplasm. Contributes to Pb(2+) ions resistance. Confers some resistance to the terpene sclareol. (Microbial infection) Involved in resistance response to the pathogenic oomycetes Phytophthora infestans and Phytophthora capsici. The protein is ABC transporter G family member 40 of Arabidopsis thaliana (Mouse-ear cress).